A 604-amino-acid polypeptide reads, in one-letter code: uncharacterized protein (604 aa).

The protein belongs to the glycosyltransferase 2 family.

This is an uncharacterized protein from Rickettsia conorii (strain ATCC VR-613 / Malish 7).